A 379-amino-acid polypeptide reads, in one-letter code: Glutamate 5-kinase (379 aa).

Position 8 (lysine 8) interacts with ATP. The substrate site is built by serine 49, aspartate 136, and asparagine 148. Residues threonine 168–aspartate 169 and threonine 211–lysine 217 contribute to the ATP site. The PUA domain maps to methionine 276 to methionine 354.

It belongs to the glutamate 5-kinase family.

The protein resides in the cytoplasm. It carries out the reaction L-glutamate + ATP = L-glutamyl 5-phosphate + ADP. Its pathway is amino-acid biosynthesis; L-proline biosynthesis; L-glutamate 5-semialdehyde from L-glutamate: step 1/2. In terms of biological role, catalyzes the transfer of a phosphate group to glutamate to form L-glutamate 5-phosphate. This Microcystis aeruginosa (strain NIES-843 / IAM M-2473) protein is Glutamate 5-kinase.